Here is a 147-residue protein sequence, read N- to C-terminus: Large ribosomal subunit protein uL15 (147 aa).

The interval M1 to M55 is disordered. Residues I23–M35 are compositionally biased toward gly residues.

The protein belongs to the universal ribosomal protein uL15 family. In terms of assembly, part of the 50S ribosomal subunit.

Functionally, binds to the 23S rRNA. The sequence is that of Large ribosomal subunit protein uL15 from Synechococcus elongatus (strain ATCC 33912 / PCC 7942 / FACHB-805) (Anacystis nidulans R2).